Reading from the N-terminus, the 192-residue chain is Small ribosomal subunit protein eS7 (192 aa).

This sequence belongs to the eukaryotic ribosomal protein eS7 family.

This chain is Small ribosomal subunit protein eS7 (RpS7), found in Culex quinquefasciatus (Southern house mosquito).